Consider the following 353-residue polypeptide: Photosystem II protein D1 (353 aa).

Thr2 is modified (N-acetylthreonine). Phosphothreonine is present on Thr2. The next 3 membrane-spanning stretches (helical) occupy residues 29 to 46 (YIGWFGVLMIPTLLTATS), 118 to 133 (HFLLGVRCYMGREWEL), and 142 to 156 (WIAVAYSAPVAAATA). Chlorophyll a is bound at residue His118. Tyr126 contacts pheophytin a. Residues Asp170 and Glu189 each coordinate [CaMn4O5] cluster. A helical membrane pass occupies residues 197–218 (FHMLGVAGVFGGSLFSAMHGSL). Chlorophyll a is bound at residue His198. Residues His215 and 264–265 (SF) contribute to the a quinone site. His215 serves as a coordination point for Fe cation. Residue His272 participates in Fe cation binding. Residues 274 to 288 (FLAAWPVIGIWFTSL) traverse the membrane as a helical segment. Residues His332, Glu333, Asp342, and Ala344 each coordinate [CaMn4O5] cluster. A propeptide spanning residues 345–353 (AVEAPSTIG) is cleaved from the precursor.

The protein belongs to the reaction center PufL/M/PsbA/D family. In terms of assembly, PSII is composed of 1 copy each of membrane proteins PsbA, PsbB, PsbC, PsbD, PsbE, PsbF, PsbH, PsbI, PsbJ, PsbK, PsbL, PsbM, PsbT, PsbX, PsbY, PsbZ, Psb30/Ycf12, at least 3 peripheral proteins of the oxygen-evolving complex and a large number of cofactors. It forms dimeric complexes. The D1/D2 heterodimer binds P680, chlorophylls that are the primary electron donor of PSII, and subsequent electron acceptors. It shares a non-heme iron and each subunit binds pheophytin, quinone, additional chlorophylls, carotenoids and lipids. D1 provides most of the ligands for the Mn4-Ca-O5 cluster of the oxygen-evolving complex (OEC). There is also a Cl(-1) ion associated with D1 and D2, which is required for oxygen evolution. The PSII complex binds additional chlorophylls, carotenoids and specific lipids. serves as cofactor. Post-translationally, tyr-161 forms a radical intermediate that is referred to as redox-active TyrZ, YZ or Y-Z. In terms of processing, C-terminally processed by CTPA; processing is essential to allow assembly of the oxygen-evolving complex and thus photosynthetic growth.

Its subcellular location is the plastid. The protein localises to the chloroplast thylakoid membrane. It carries out the reaction 2 a plastoquinone + 4 hnu + 2 H2O = 2 a plastoquinol + O2. Its function is as follows. Photosystem II (PSII) is a light-driven water:plastoquinone oxidoreductase that uses light energy to abstract electrons from H(2)O, generating O(2) and a proton gradient subsequently used for ATP formation. It consists of a core antenna complex that captures photons, and an electron transfer chain that converts photonic excitation into a charge separation. The D1/D2 (PsbA/PsbD) reaction center heterodimer binds P680, the primary electron donor of PSII as well as several subsequent electron acceptors. The protein is Photosystem II protein D1 of Landoltia punctata (Dotted duckmeat).